Consider the following 314-residue polypeptide: Olfactory receptor 4K2 (314 aa).

The Extracellular segment spans residues 1 to 25 (MDVGNKSTMSEFVLLGLSNSWELQM). An N-linked (GlcNAc...) asparagine glycan is attached at N5. Residues 26–49 (FFFMVFSLLYVATMVGNSLIVITV) traverse the membrane as a helical segment. At 50 to 57 (IVDPHLHS) the chain is on the cytoplasmic side. A helical membrane pass occupies residues 58–79 (PMYFLLTNLSIIDMSLASFATP). Over 80–100 (KMITDYLTGHKTISFDGCLTQ) the chain is Extracellular. The cysteines at positions 97 and 189 are disulfide-linked. A helical membrane pass occupies residues 101–120 (IFFLHLFTGTEIILLMAMSF). Topologically, residues 121–139 (DRYIAICKPLHYASVISPQ) are cytoplasmic. A helical membrane pass occupies residues 140-158 (VCVALVVASWIMGVMHSMS). The Extracellular segment spans residues 159-195 (QVIFALTLPFCGPYEVDSFFCDLPVVFQLACVDTYVL). Residues 196–219 (GLFMISTSGIIALSCFIVLFNSYV) traverse the membrane as a helical segment. Residues 220-235 (IVLVTVKHHSSRGSSK) are Cytoplasmic-facing. Residues 236 to 258 (ALSTCTAHFIVVFLFFGPCIFIY) traverse the membrane as a helical segment. Residues 259 to 269 (MWPLSSFLTDK) lie on the Extracellular side of the membrane. Residues 270–289 (ILSVFYTIFTPTLNPIIYTL) traverse the membrane as a helical segment. At 290 to 314 (RNQEVKIAMRKLKNRFLNFNKAMPS) the chain is on the cytoplasmic side.

Belongs to the G-protein coupled receptor 1 family.

Its subcellular location is the cell membrane. In terms of biological role, odorant receptor. This Homo sapiens (Human) protein is Olfactory receptor 4K2 (OR4K2).